The chain runs to 86 residues: Protein IDA-LIKE 1 (86 aa).

Residues 1–27 (MNLSHKTMFMTLYIVFLLIFGSYNATA) form the signal peptide.

Expressed in roots.

It is found in the secreted. The protein localises to the extracellular space. Functionally, involved in an ethylene-independent separation step of floral abscission. May act with RLK5 and HSL2 as ligand-receptor pairs. The chain is Protein IDA-LIKE 1 (IDL1) from Arabidopsis thaliana (Mouse-ear cress).